Here is a 396-residue protein sequence, read N- to C-terminus: Elongation factor Tu (396 aa).

Residues 11 to 205 form the tr-type G domain; it reads KPHVNIGTIG…TVDEYIPTPE (195 aa). Residues 20-27 form a G1 region; sequence GHVDHGKT. 20 to 27 lines the GTP pocket; that stretch reads GHVDHGKT. Thr27 serves as a coordination point for Mg(2+). Residues 61–65 form a G2 region; that stretch reads GITIN. The interval 82–85 is G3; that stretch reads DAPG. Residues 82–86 and 137–140 each bind GTP; these read DAPGH and NKVD. Residues 137 to 140 form a G4 region; the sequence is NKVD. Residues 175–177 form a G5 region; sequence SAL.

It belongs to the TRAFAC class translation factor GTPase superfamily. Classic translation factor GTPase family. EF-Tu/EF-1A subfamily. As to quaternary structure, monomer.

The protein localises to the cytoplasm. It carries out the reaction GTP + H2O = GDP + phosphate + H(+). In terms of biological role, GTP hydrolase that promotes the GTP-dependent binding of aminoacyl-tRNA to the A-site of ribosomes during protein biosynthesis. This chain is Elongation factor Tu, found in Lactobacillus johnsonii (strain CNCM I-12250 / La1 / NCC 533).